The following is a 65-amino-acid chain: Toxin KTx8 (65 aa).

A signal peptide spans 1-25 (MNKVCFVVVLVLFVALAAYVSPIEG). 3 disulfide bridges follow: C31-C53, C38-C61, and C42-C63.

This sequence belongs to the short scorpion toxin superfamily. Potassium channel inhibitor family. Alpha-KTx 11 subfamily. Expressed by the venom gland.

The protein resides in the secreted. This recombinant toxin inhibits the mammalian voltage-gated potassium channels Kv1.3/KCNA3 in vitro with an IC(50) of 26.40 nM. The polypeptide is Toxin KTx8 (Lychas mucronatus (Chinese swimming scorpion)).